We begin with the raw amino-acid sequence, 612 residues long: tRNA 5-methylaminomethyl-2-thiouridine biosynthesis bifunctional protein MnmC (612 aa).

The segment at 1–218 (MITFRGDGLY…KREILEASLE (218 aa)) is tRNA (mnm(5)s(2)U34)-methyltransferase. Residues 244–612 (IGAGVAGLAA…VRKLKRGLVR (369 aa)) form an FAD-dependent cmnm(5)s(2)U34 oxidoreductase region.

This sequence in the N-terminal section; belongs to the methyltransferase superfamily. tRNA (mnm(5)s(2)U34)-methyltransferase family. In the C-terminal section; belongs to the DAO family. FAD serves as cofactor.

The protein localises to the cytoplasm. The catalysed reaction is 5-aminomethyl-2-thiouridine(34) in tRNA + S-adenosyl-L-methionine = 5-methylaminomethyl-2-thiouridine(34) in tRNA + S-adenosyl-L-homocysteine + H(+). Its function is as follows. Catalyzes the last two steps in the biosynthesis of 5-methylaminomethyl-2-thiouridine (mnm(5)s(2)U) at the wobble position (U34) in tRNA. Catalyzes the FAD-dependent demodification of cmnm(5)s(2)U34 to nm(5)s(2)U34, followed by the transfer of a methyl group from S-adenosyl-L-methionine to nm(5)s(2)U34, to form mnm(5)s(2)U34. In Campylobacter fetus subsp. fetus (strain 82-40), this protein is tRNA 5-methylaminomethyl-2-thiouridine biosynthesis bifunctional protein MnmC.